A 1053-amino-acid polypeptide reads, in one-letter code: Translation initiation factor IF-2 (1053 aa).

Over residues 1-20 (MSESKNSGENTLSVTPTKTL) the composition is skewed to polar residues. A disordered region spans residues 1-442 (MSESKNSGEN…TATGGEEEER (442 aa)). Low complexity-rich tracts occupy residues 64-76 (EAAPTPAPAATVT) and 83-102 (RPAAPNPTAAPTTPPAAAVP). 2 stretches are compositionally biased toward pro residues: residues 131–141 (PAQPKAEPVPA) and 150–161 (APVPPVPAPSAP). A compositionally biased stretch (low complexity) spans 178–220 (PVSQAKPIQTAPVQTAPAAQASASQTTGPRPVAAGPRPATGAA). Positions 255–264 (GGRGGPGRGE) are enriched in gly residues. 2 stretches are compositionally biased toward basic and acidic residues: residues 279-288 (LTDEEREARA) and 295-353 (RIRE…EAKR). Over residues 375 to 386 (TATAAAPAAAAP) the composition is skewed to low complexity. One can recognise a tr-type G domain in the interval 550 to 720 (PRPPVVTIMG…ALQAELLDLK (171 aa)). Positions 559–566 (GHVDHGKT) are G1. 559–566 (GHVDHGKT) is a GTP binding site. Positions 584-588 (GITQH) are G2. The interval 606–609 (DTPG) is G3. Residues 606 to 610 (DTPGH) and 660 to 663 (NKID) each bind GTP. The interval 660 to 663 (NKID) is G4. Residues 696–698 (SAT) form a G5 region.

This sequence belongs to the TRAFAC class translation factor GTPase superfamily. Classic translation factor GTPase family. IF-2 subfamily.

It is found in the cytoplasm. Its function is as follows. One of the essential components for the initiation of protein synthesis. Protects formylmethionyl-tRNA from spontaneous hydrolysis and promotes its binding to the 30S ribosomal subunits. Also involved in the hydrolysis of GTP during the formation of the 70S ribosomal complex. The chain is Translation initiation factor IF-2 from Beijerinckia indica subsp. indica (strain ATCC 9039 / DSM 1715 / NCIMB 8712).